The primary structure comprises 208 residues: Inner membrane-spanning protein YciB (208 aa).

Helical transmembrane passes span 49 to 69 (APVL…ILWL), 78 to 98 (TMLW…IYFH), 105 to 125 (WKPT…ELVF), 150 to 170 (FSWV…AFNF), and 178 to 198 (FKLF…AFFL).

The protein belongs to the YciB family.

The protein localises to the cell inner membrane. Its function is as follows. Plays a role in cell envelope biogenesis, maintenance of cell envelope integrity and membrane homeostasis. The sequence is that of Inner membrane-spanning protein YciB from Polaromonas naphthalenivorans (strain CJ2).